A 216-amino-acid polypeptide reads, in one-letter code: 4-hydroxy-tetrahydrodipicolinate reductase (216 aa).

NAD(+)-binding positions include 7–12 (GYSGRM), 71–73 (GTT), and 95–98 (AYNF). The active-site Proton donor/acceptor is H127. H128 contacts (S)-2,3,4,5-tetrahydrodipicolinate. Catalysis depends on K131, which acts as the Proton donor. 137–138 (GT) contributes to the (S)-2,3,4,5-tetrahydrodipicolinate binding site.

The protein belongs to the DapB family.

The protein resides in the cytoplasm. It carries out the reaction (S)-2,3,4,5-tetrahydrodipicolinate + NAD(+) + H2O = (2S,4S)-4-hydroxy-2,3,4,5-tetrahydrodipicolinate + NADH + H(+). The enzyme catalyses (S)-2,3,4,5-tetrahydrodipicolinate + NADP(+) + H2O = (2S,4S)-4-hydroxy-2,3,4,5-tetrahydrodipicolinate + NADPH + H(+). Its pathway is amino-acid biosynthesis; L-lysine biosynthesis via DAP pathway; (S)-tetrahydrodipicolinate from L-aspartate: step 4/4. Functionally, catalyzes the conversion of 4-hydroxy-tetrahydrodipicolinate (HTPA) to tetrahydrodipicolinate. In Thermotoga sp. (strain RQ2), this protein is 4-hydroxy-tetrahydrodipicolinate reductase.